Here is a 189-residue protein sequence, read N- to C-terminus: Chitin synthase 1 (189 aa).

This sequence belongs to the chitin synthase family.

It is found in the cell membrane. It carries out the reaction [(1-&gt;4)-N-acetyl-beta-D-glucosaminyl](n) + UDP-N-acetyl-alpha-D-glucosamine = [(1-&gt;4)-N-acetyl-beta-D-glucosaminyl](n+1) + UDP + H(+). Polymerizes chitin, a structural polymer of the cell wall and septum, by transferring the sugar moiety of UDP-GlcNAc to the non-reducing end of the growing chitin polymer. The sequence is that of Chitin synthase 1 (CHS1) from Schizophyllum commune (Split gill fungus).